A 430-amino-acid chain; its full sequence is Serine--tRNA ligase (430 aa).

237–239 is an L-serine binding site; the sequence is TAE. 268–270 contributes to the ATP binding site; sequence RRE. Glu-291 contributes to the L-serine binding site. Residue 355–358 coordinates ATP; sequence EISS. Position 391 (Ser-391) interacts with L-serine.

This sequence belongs to the class-II aminoacyl-tRNA synthetase family. Type-1 seryl-tRNA synthetase subfamily. As to quaternary structure, homodimer. The tRNA molecule binds across the dimer.

It localises to the cytoplasm. The enzyme catalyses tRNA(Ser) + L-serine + ATP = L-seryl-tRNA(Ser) + AMP + diphosphate + H(+). It carries out the reaction tRNA(Sec) + L-serine + ATP = L-seryl-tRNA(Sec) + AMP + diphosphate + H(+). It functions in the pathway aminoacyl-tRNA biosynthesis; selenocysteinyl-tRNA(Sec) biosynthesis; L-seryl-tRNA(Sec) from L-serine and tRNA(Sec): step 1/1. Catalyzes the attachment of serine to tRNA(Ser). Is also able to aminoacylate tRNA(Sec) with serine, to form the misacylated tRNA L-seryl-tRNA(Sec), which will be further converted into selenocysteinyl-tRNA(Sec). This is Serine--tRNA ligase from Magnetococcus marinus (strain ATCC BAA-1437 / JCM 17883 / MC-1).